Here is a 455-residue protein sequence, read N- to C-terminus: Catalase-like protein (455 aa).

Residues 1–25 (MSQQDKKLTGVFGHPVSDRENSMTA) are disordered.

The protein belongs to the catalase family.

In terms of biological role, catalytically inactive. The chain is Catalase-like protein (katB) from Staphylococcus aureus.